A 341-amino-acid polypeptide reads, in one-letter code: Protein pelota homolog (341 aa).

It belongs to the eukaryotic release factor 1 family. Pelota subfamily. As to quaternary structure, monomer. Requires a divalent metal cation as cofactor.

The protein resides in the cytoplasm. Functionally, may function in recognizing stalled ribosomes, interact with stem-loop structures in stalled mRNA molecules, and effect endonucleolytic cleavage of the mRNA. May play a role in the release non-functional ribosomes and degradation of damaged mRNAs. Has endoribonuclease activity. This is Protein pelota homolog from Methanospirillum hungatei JF-1 (strain ATCC 27890 / DSM 864 / NBRC 100397 / JF-1).